A 209-amino-acid polypeptide reads, in one-letter code: Uracil phosphoribosyltransferase (209 aa).

5-phospho-alpha-D-ribose 1-diphosphate contacts are provided by residues R79, R104, and 131–139 (DPMLATGGS). Uracil-binding positions include I194 and 199 to 201 (GDA). 5-phospho-alpha-D-ribose 1-diphosphate is bound at residue D200.

Belongs to the UPRTase family. It depends on Mg(2+) as a cofactor.

It catalyses the reaction UMP + diphosphate = 5-phospho-alpha-D-ribose 1-diphosphate + uracil. It functions in the pathway pyrimidine metabolism; UMP biosynthesis via salvage pathway; UMP from uracil: step 1/1. With respect to regulation, allosterically activated by GTP. Catalyzes the conversion of uracil and 5-phospho-alpha-D-ribose 1-diphosphate (PRPP) to UMP and diphosphate. This is Uracil phosphoribosyltransferase from Streptococcus uberis (strain ATCC BAA-854 / 0140J).